Consider the following 1001-residue polypeptide: E3 ubiquitin-protein ligase BRE1B (1001 aa).

Residues 1–31 (MSGLGNKRAAGDGGSGPPEKKLSREEKTTTT) are disordered. A compositionally biased stretch (basic and acidic residues) spans 18–28 (PEKKLSREEKT). Lys-20 is subject to N6-acetyllysine. Ser-42 is modified (phosphoserine). The stretch at 45–91 (EEIDLKVLQFKNKKLAERLEQRQACEDELRERIEKLEKRQATDDATL) forms a coiled coil. The interval 116–149 (GELSSAPEAPGTQEGPTCDGTPLPEPGTSELREP) is disordered. Coiled coils occupy residues 228–377 (ARTR…LRSL) and 437–523 (LQKK…AQTS). Residues Lys-355 and Lys-517 each carry the N6-acetyllysine modification. The tract at residues 516–646 (GKLRAQTSGS…EKAKVEEAKR (131 aa)) is disordered. A compositionally biased stretch (polar residues) spans 520–531 (AQTSGSTHSTPN). Position 528 is a phosphoserine (Ser-528). Residues Lys-578 and Lys-579 each participate in a glycyl lysine isopeptide (Lys-Gly) (interchain with G-Cter in SUMO2) cross-link. Ser-585 is subject to Phosphoserine. Composition is skewed to basic and acidic residues over residues 602-619 (RGREPEARPKRELREREG) and 633-646 (RADREKAKVEEAKR). A coiled-coil region spans residues 627-946 (VASALSRADR…EEIKEYKARL (320 aa)). An RING-type zinc finger spans residues 948–987 (CPCCNTRKKDAVLTKCFHVFCFECVRGRYEARQRKCPKCN).

It belongs to the BRE1 family. As to quaternary structure, component of the RNF20/40 complex (also known as BRE1 complex) probably composed of 2 copies of RNF20/BRE1A and 2 copies of RNF40/BRE1B. Interacts with UBE2E1/UBCH6. Interacts with RB1 and WAC.

The protein localises to the nucleus. The catalysed reaction is S-ubiquitinyl-[E2 ubiquitin-conjugating enzyme]-L-cysteine + [acceptor protein]-L-lysine = [E2 ubiquitin-conjugating enzyme]-L-cysteine + N(6)-ubiquitinyl-[acceptor protein]-L-lysine.. It functions in the pathway protein modification; protein ubiquitination. Its function is as follows. Component of the RNF20/40 E3 ubiquitin-protein ligase complex that mediates monoubiquitination of 'Lys-120' of histone H2B (H2BK120ub1). H2BK120ub1 gives a specific tag for epigenetic transcriptional activation and is also prerequisite for histone H3 'Lys-4' and 'Lys-79' methylation (H3K4me and H3K79me, respectively). It thereby plays a central role in histone code and gene regulation. The RNF20/40 complex forms a H2B ubiquitin ligase complex in cooperation with the E2 enzyme UBE2A or UBE2B; reports about the cooperation with UBE2E1/UBCH are contradictory. Required for transcriptional activation of Hox genes. This Macaca fascicularis (Crab-eating macaque) protein is E3 ubiquitin-protein ligase BRE1B (RNF40).